The primary structure comprises 386 residues: Alkanesulfonate monooxygenase (386 aa).

It belongs to the SsuD family.

The catalysed reaction is an alkanesulfonate + FMNH2 + O2 = an aldehyde + FMN + sulfite + H2O + 2 H(+). In terms of biological role, catalyzes the desulfonation of aliphatic sulfonates. The chain is Alkanesulfonate monooxygenase from Delftia acidovorans (strain DSM 14801 / SPH-1).